The chain runs to 36 residues: TICTGADRPCAACCPCCPGTSCQGPEPNGVSYCRND.

Cystine bridges form between Cys3–Cys17, Cys10–Cys22, Cys13–Cys14, and Cys16–Cys33.

It belongs to the neurotoxin 11 (kappa toxin) family. In terms of tissue distribution, expressed by the venom gland.

The protein localises to the secreted. This excitatory toxin inhibits insect calcium-activated potassium (KCa) channels (Slo-type). This Hadronyche versuta (Blue mountains funnel-web spider) protein is Lambda-hexatoxin-Hv1b.